The sequence spans 645 residues: Cyclin-D-binding Myb-like transcription factor 1 (645 aa).

2 disordered regions span residues glutamine 34 to tyrosine 71 and arginine 95 to glutamate 119. Composition is skewed to acidic residues over residues aspartate 36–threonine 46 and arginine 95–serine 105. In terms of domain architecture, Myb-like 1 spans glycine 219–arginine 257. The HTH myb-type domain maps to lysine 262–glutamine 327. A DNA-binding region (H-T-H motif) is located at residues tryptophan 300–leucine 323. The Myb-like 2 domain maps to tryptophan 333–lysine 382. The disordered stretch occupies residues valine 568–asparagine 645. Basic and acidic residues predominate over residues glutamate 587–aspartate 597. Polar residues predominate over residues isoleucine 615–serine 625.

The protein belongs to the DMTF1 family.

The protein localises to the nucleus. In terms of biological role, transcriptional activator which activates the CDKN2A/ARF locus in response to Ras-Raf signaling, thereby promoting p53/TP53-dependent growth arrest. Binds to the consensus sequence 5'-CCCG[GT]ATGT-3'. This is Cyclin-D-binding Myb-like transcription factor 1 (dmtf1) from Danio rerio (Zebrafish).